We begin with the raw amino-acid sequence, 128 residues long: CD59 glycoprotein (128 aa).

Residues 1–25 (MGIQGGSVLFGLLLVLAVFCHSGHS) form the signal peptide. One can recognise a UPAR/Ly6 domain in the interval 26-108 (LQCYNCPNPT…QLENGGTSLS (83 aa)). Intrachain disulfides connect Cys28-Cys51, Cys31-Cys38, Cys44-Cys64, Cys70-Cys88, and Cys89-Cys94. N-linked (GlcNAc...) asparagine glycosylation occurs at Asn43. Asn102 carries GPI-anchor amidated asparagine lipidation. The propeptide at 103 to 128 (GGTSLSEKTVVLLVTLLLAAAWCLHP) is removed in mature form.

In terms of assembly, interacts with T-cell surface antigen CD2. Post-translationally, N- and O-glycosylated.

The protein localises to the cell membrane. It localises to the secreted. Potent inhibitor of the complement membrane attack complex (MAC) action, which protects self-cells from damage during complement activation. Acts by binding to the beta-haipins of C8 (C8A and C8B) components of the assembling MAC, forming an intermolecular beta-sheet that prevents incorporation of the multiple copies of C9 required for complete formation of the osmolytic pore. The polypeptide is CD59 glycoprotein (Chlorocebus aethiops (Green monkey)).